The sequence spans 374 residues: N-acetyldiaminopimelate deacetylase (374 aa).

The active site involves Asp69. Glu128 functions as the Proton acceptor in the catalytic mechanism.

Belongs to the peptidase M20A family. N-acetyldiaminopimelate deacetylase subfamily.

It catalyses the reaction N-acetyl-(2S,6S)-2,6-diaminopimelate + H2O = (2S,6S)-2,6-diaminopimelate + acetate. It participates in amino-acid biosynthesis; L-lysine biosynthesis via DAP pathway; LL-2,6-diaminopimelate from (S)-tetrahydrodipicolinate (acetylase route): step 3/3. In terms of biological role, catalyzes the conversion of N-acetyl-diaminopimelate to diaminopimelate and acetate. The polypeptide is N-acetyldiaminopimelate deacetylase (ykuR) (Bacillus subtilis (strain 168)).